Reading from the N-terminus, the 424-residue chain is Glutamate-1-semialdehyde 2,1-aminomutase (424 aa).

Lys-266 carries the N6-(pyridoxal phosphate)lysine modification.

This sequence belongs to the class-III pyridoxal-phosphate-dependent aminotransferase family. HemL subfamily. As to quaternary structure, homodimer. Requires pyridoxal 5'-phosphate as cofactor.

The protein localises to the cytoplasm. The catalysed reaction is (S)-4-amino-5-oxopentanoate = 5-aminolevulinate. It participates in porphyrin-containing compound metabolism; protoporphyrin-IX biosynthesis; 5-aminolevulinate from L-glutamyl-tRNA(Glu): step 2/2. In Azoarcus sp. (strain BH72), this protein is Glutamate-1-semialdehyde 2,1-aminomutase.